The following is a 367-amino-acid chain: Glycerol dehydrogenase (367 aa).

5 residues coordinate NAD(+): Asp-37, Gly-94, Lys-95, Thr-116, and Ser-119. Asp-121 lines the glycerol pocket. Residues Ser-125, Leu-127, and Tyr-131 each contribute to the NAD(+) site. Zn(2+)-binding residues include Asp-171, His-254, and His-271. Residue His-254 participates in glycerol binding.

Belongs to the iron-containing alcohol dehydrogenase family. It depends on Zn(2+) as a cofactor.

It carries out the reaction glycerol + NAD(+) = dihydroxyacetone + NADH + H(+). It participates in polyol metabolism; glycerol fermentation; glycerone phosphate from glycerol (oxidative route): step 1/2. Its function is as follows. Catalyzes the NAD-dependent oxidation of glycerol to dihydroxyacetone (glycerone). Allows microorganisms to utilize glycerol as a source of carbon under anaerobic conditions. The chain is Glycerol dehydrogenase (gldA) from Escherichia coli O6:H1 (strain CFT073 / ATCC 700928 / UPEC).